The primary structure comprises 585 residues: T-cell surface protein tactile (585 aa).

The first 21 residues, 1–21 (MEKKWKYCAVYYIIQIHFVKG), serve as a signal peptide directing secretion. Topologically, residues 22-519 (VWEKTVNTEE…IVVNKPKDGM (498 aa)) are extracellular. The Ig-like V-type 1 domain maps to 38 to 125 (GSDVNLTCQT…YECMLVLYPE (88 aa)). Asn-42, Asn-97, Asn-107, Asn-148, Asn-156, Asn-166, Asn-200, Asn-215, Asn-277, Asn-278, Asn-300, Asn-350, and Asn-368 each carry an N-linked (GlcNAc...) asparagine glycan. A disulfide bridge links Cys-45 with Cys-118. The Ig-like V-type 2 domain maps to 156-238 (NQTLEIPCFQ…YRLHLSPVQI (83 aa)). A disulfide bridge links Cys-163 with Cys-247. An Ig-like C2-type domain is found at 269 to 375 (PEIPVIVENN…VWNISSEKIT (107 aa)). A disulfide bond links Cys-290 and Cys-355. Polar residues-rich tracts occupy residues 385 to 418 (TDPP…SSVT), 426 to 452 (RPNT…SSGT), and 460 to 475 (RIPS…GAGS). The tract at residues 385-475 (TDPPLSVTES…YSSSPSGAGS (91 aa)) is disordered. N-linked (GlcNAc...) asparagine glycosylation is present at Asn-435. Asn-497 is a glycosylation site (N-linked (GlcNAc...) asparagine). A helical transmembrane segment spans residues 520 to 540 (SWPVIVAALLFCCMILFGLGV). Residues 541–585 (RKWCQYQKEIMERPPPFKPPPPPIKYTCIQEPNESDLPYHEMETL) are Cytoplasmic-facing.

As to quaternary structure, homodimer; disulfide-linked. Interacts with PVR. As to expression, expressed on normal T-cell lines and clones, and some transformed T-cells, but no other cultured cell lines tested. It is expressed at very low levels on activated B-cells.

It is found in the membrane. May be involved in adhesive interactions of activated T and NK cells during the late phase of the immune response. Promotes NK cell-target adhesion by interacting with PVR present on target cells. May function at a time after T and NK cells have penetrated the endothelium using integrins and selectins, when they are actively engaging diseased cells and moving within areas of inflammation. The polypeptide is T-cell surface protein tactile (CD96) (Homo sapiens (Human)).